Consider the following 130-residue polypeptide: Large ribosomal subunit protein bL17 (130 aa).

The protein belongs to the bacterial ribosomal protein bL17 family. As to quaternary structure, part of the 50S ribosomal subunit. Contacts protein L32.

This is Large ribosomal subunit protein bL17 from Buchnera aphidicola subsp. Acyrthosiphon pisum (strain APS) (Acyrthosiphon pisum symbiotic bacterium).